A 242-amino-acid polypeptide reads, in one-letter code: MNQVLTQSRPIRLKGRSFLALVLSPELPLDGWLDKLDDLAARSVGFFLNRPIVLDLENVSIERPQLVQLLEDLVKRGVWITGFENARPSLLGPGMPPAMRGGQPAADFDPEITEPKSQERTPVAPASVQLVKAVPSMVVTEPVRSGQSVYFPDGDVTIVGSVASGAEVVAGGSIHVYGALRGRAMAGTAGNADARIFCRKMEAELVAIDGLYKTAEDMESRLRGQAVQLWLDGDYMMAETLN.

It belongs to the MinC family. In terms of assembly, interacts with MinD and FtsZ.

Its function is as follows. Cell division inhibitor that blocks the formation of polar Z ring septums. Rapidly oscillates between the poles of the cell to destabilize FtsZ filaments that have formed before they mature into polar Z rings. Prevents FtsZ polymerization. This chain is Probable septum site-determining protein MinC, found in Brucella anthropi (strain ATCC 49188 / DSM 6882 / CCUG 24695 / JCM 21032 / LMG 3331 / NBRC 15819 / NCTC 12168 / Alc 37) (Ochrobactrum anthropi).